The chain runs to 332 residues: Elongin-A (332 aa).

One can recognise an F-box domain in the interval 24–68 (LEDIGHMPYALVRRVLLKMSAEQLLRLERASPALLLEDEEAWQQL). The segment at 228–332 (TPSAQPAASL…KPRVYIHTPR (105 aa)) is disordered. Positions 296 to 309 (LFSSPALSTLLPQQ) are enriched in polar residues. Residues 320–332 (PPKKPRVYIHTPR) are compositionally biased toward basic residues.

It belongs to the ELA1 family. As to quaternary structure, heterodimer with ELC1. Component of a CRL3 E3 ubiquitin ligase complex consisting of a cullin, the linker protein ELC1, the substrate receptor ELA1, and a RING protein. Interacts with the large RNA polymerase II subunit RPO21 in a manner dependent on DEF1.

Functionally, as part of the CRL3 E3 ubiquitin ligase complex; polyubiquitylates monoubiquitylated RNA polymerase II subunit RPO21 to trigger its proteolysis; plays a role in global genomic repair. This is Elongin-A (ELA1) from Eremothecium gossypii (strain ATCC 10895 / CBS 109.51 / FGSC 9923 / NRRL Y-1056) (Yeast).